Consider the following 200-residue polypeptide: Transcription elongation factor A protein-like 6 (200 aa).

The interval 1-200 is disordered; that stretch reads MEKPYNKNEG…QRGLHDIPYL (200 aa). The segment covering 20 to 36 has biased composition (acidic residues); it reads DEVEPDDEGKSDEEEKP. Phosphoserine is present on serine 30. 3 stretches are compositionally biased toward basic and acidic residues: residues 37 to 52, 60 to 80, and 115 to 154; these read DAEG…KAEG, LEDK…KPQG, and DRGT…EELR. Phosphoserine is present on serine 65.

The protein belongs to the TFS-II family. TFA subfamily.

Its subcellular location is the nucleus. Its function is as follows. May be involved in transcriptional regulation. This chain is Transcription elongation factor A protein-like 6 (TCEAL6), found in Homo sapiens (Human).